The following is a 103-amino-acid chain: MYAVIKTGGKQYRVSAGQKLKVEQIPADVGAEVTLDQILMVGEGESVKIGAPFLAGATVKCTVVSHGRHDKVKIFKMRRRKHYQKRQGHRQNYTELRIDTIAA.

Belongs to the bacterial ribosomal protein bL21 family. As to quaternary structure, part of the 50S ribosomal subunit. Contacts protein L20.

In terms of biological role, this protein binds to 23S rRNA in the presence of protein L20. In Dechloromonas aromatica (strain RCB), this protein is Large ribosomal subunit protein bL21.